A 312-amino-acid chain; its full sequence is DNA-directed RNA polymerase subunit alpha (312 aa).

Residues 1-226 (MIEFEKPNIT…EHLDIFVNLT (226 aa)) form an alpha N-terminal domain (alpha-NTD) region. The interval 243-312 (KEKMLEMTIE…DLGLGLRKED (70 aa)) is alpha C-terminal domain (alpha-CTD).

This sequence belongs to the RNA polymerase alpha chain family. Homodimer. The RNAP catalytic core consists of 2 alpha, 1 beta, 1 beta' and 1 omega subunit. When a sigma factor is associated with the core the holoenzyme is formed, which can initiate transcription.

The enzyme catalyses RNA(n) + a ribonucleoside 5'-triphosphate = RNA(n+1) + diphosphate. Functionally, DNA-dependent RNA polymerase catalyzes the transcription of DNA into RNA using the four ribonucleoside triphosphates as substrates. This is DNA-directed RNA polymerase subunit alpha from Lacticaseibacillus casei (strain BL23) (Lactobacillus casei).